Reading from the N-terminus, the 616-residue chain is Zinc metalloproteinase-disintegrin-like ecarin (616 aa).

The signal sequence occupies residues 1–20 (MIQILLVIICLAVFPYQGCS). Positions 21-190 (IILGSGNVND…EPIKKTLGLI (170 aa)) are excised as a propeptide. The 197-residue stretch at 201 to 397 (KFIELVVVVD…YNPKCILDPP (197 aa)) folds into the Peptidase M12B domain. Glu-204 lines the Ca(2+) pocket. Residues Asn-219 and Asn-261 are each glycosylated (N-linked (GlcNAc...) asparagine). Residue Asp-288 coordinates Ca(2+). N-linked (GlcNAc...) asparagine glycans are attached at residues Asn-295 and Asn-326. 3 disulfides stabilise this stretch: Cys-312/Cys-392, Cys-352/Cys-376, and Cys-354/Cys-359. His-337 provides a ligand contact to Zn(2+). Glu-338 is a catalytic residue. Zn(2+) contacts are provided by His-341 and His-347. Cys-392, Val-407, Asn-410, Ile-412, Glu-414, Glu-417, and Asp-420 together coordinate Ca(2+). One can recognise a Disintegrin domain in the interval 405–491 (PAVCGNEIWE…ECPRNEFQRN (87 aa)). 14 disulfide bridges follow: Cys-408–Cys-437, Cys-419–Cys-432, Cys-421–Cys-427, Cys-431–Cys-454, Cys-445–Cys-451, Cys-450–Cys-476, Cys-463–Cys-483, Cys-470–Cys-502, Cys-495–Cys-507, Cys-514–Cys-567, Cys-529–Cys-578, Cys-542–Cys-555, Cys-562–Cys-604, and Cys-598–Cys-609. The D/ECD-tripeptide motif lies at 469-471 (DCD). Asp-471, Val-472, and Asn-486 together coordinate Ca(2+). N-linked (GlcNAc...) asparagine glycosylation occurs at Asn-497.

Belongs to the venom metalloproteinase (M12B) family. P-III subfamily. P-IIIa sub-subfamily. In terms of assembly, monomer. Zn(2+) serves as cofactor. In terms of tissue distribution, expressed by the venom gland.

Its subcellular location is the secreted. Snake venom zinc metalloproteinase that catalyzes the conversion of prothrombin (F2) to alpha-thrombin through formation of a thrombin intermediate, thereby functioning as a procoagulant protein. Has a low Km for prothrombin and a high kcat. Cleaves the 320-Arg-Ile-321 bond in prothrombin and produces meizothrombin which is ultimately converted to alpha-thrombin by autolysis. The polypeptide is Zinc metalloproteinase-disintegrin-like ecarin (Echis carinatus (Saw-scaled viper)).